The following is a 277-amino-acid chain: MALKHFKPVTPSLRQLVIVDRSGLYKGKPVKTLTEGKSSSGGRNNNGRITVRFRGGGHKQTYRLVDFKRTKRGVPAVVDRIEYDPNRSAFIALIKYEDGDLAYILAPQRLAVGDQVIAGEQVDVKPGNAGPLSSLPVGTIVHNVELKVGKGGQIARSAGTYAQIVGRDQGYVIVRLNSGEQRLVLGACYATVGAVSNPDHMNISLGKAGRNRWLGRKPHNRGVTMNPVDHPHGGGEGRTSGGRNPVTPWGFPTKGKKTRNNKATDKFIVSSRHKRKK.

Residues 222 to 277 are disordered; sequence GVTMNPVDHPHGGGEGRTSGGRNPVTPWGFPTKGKKTRNNKATDKFIVSSRHKRKK.

Belongs to the universal ribosomal protein uL2 family. As to quaternary structure, part of the 50S ribosomal subunit. Forms a bridge to the 30S subunit in the 70S ribosome.

Functionally, one of the primary rRNA binding proteins. Required for association of the 30S and 50S subunits to form the 70S ribosome, for tRNA binding and peptide bond formation. It has been suggested to have peptidyltransferase activity; this is somewhat controversial. Makes several contacts with the 16S rRNA in the 70S ribosome. In Xanthobacter autotrophicus (strain ATCC BAA-1158 / Py2), this protein is Large ribosomal subunit protein uL2.